The chain runs to 145 residues: Putative pre-16S rRNA nuclease (145 aa).

The protein belongs to the YqgF nuclease family.

Its subcellular location is the cytoplasm. Could be a nuclease involved in processing of the 5'-end of pre-16S rRNA. The protein is Putative pre-16S rRNA nuclease of Pseudomonas fluorescens (strain Pf0-1).